The following is a 416-amino-acid chain: Geranyl diphosphate synthase (416 aa).

Mg(2+) is bound by residues Asp157 and Asp161. The DDXXD motif motif lies at 157–161 (DDIMD).

This sequence belongs to the FPP/GGPP synthase family. The cofactor is Mg(2+). As to expression, specifically expressed in the anterior midgut of male beetles, the site of aggregation pheromone biosynthesis.

The catalysed reaction is isopentenyl diphosphate + dimethylallyl diphosphate = (2E)-geranyl diphosphate + diphosphate. It participates in pheromone biosynthesis. Its function is as follows. Geranyl diphosphate synthase involved in pheromone biosynthesis. This is Geranyl diphosphate synthase from Ips pini (Pine engraver beetle).